Here is a 417-residue protein sequence, read N- to C-terminus: 3-isopropylmalate dehydratase large subunit (417 aa).

[4Fe-4S] cluster is bound by residues C298, C358, and C361.

This sequence belongs to the aconitase/IPM isomerase family. LeuC type 2 subfamily. In terms of assembly, heterodimer of LeuC and LeuD. [4Fe-4S] cluster is required as a cofactor.

The enzyme catalyses (2R,3S)-3-isopropylmalate = (2S)-2-isopropylmalate. It participates in amino-acid biosynthesis; L-leucine biosynthesis; L-leucine from 3-methyl-2-oxobutanoate: step 2/4. Functionally, catalyzes the isomerization between 2-isopropylmalate and 3-isopropylmalate, via the formation of 2-isopropylmaleate. This chain is 3-isopropylmalate dehydratase large subunit, found in Thermoanaerobacter pseudethanolicus (strain ATCC 33223 / 39E) (Clostridium thermohydrosulfuricum).